Here is a 697-residue protein sequence, read N- to C-terminus: Ion-translocating oxidoreductase complex subunit C (697 aa).

4Fe-4S ferredoxin-type domains follow at residues 366–397 (AEMGLSEPEQSCIRCGLCVDACPAGLLPQQLY) and 407–436 (KARNHNLFDCIECGACAYVCPSNIPLVQYY). 8 residues coordinate [4Fe-4S] cluster: Cys-377, Cys-380, Cys-383, Cys-387, Cys-416, Cys-419, Cys-422, and Cys-426. The tract at residues 576-674 (AQLESEPVKS…APEEDPRKAA (99 aa)) is disordered. Residues 581–596 (EPVKSESEAPEEDPRK) show a composition bias toward basic and acidic residues. The span at 597 to 615 (AAVAAAIARVKAKKAAQAQ) shows a compositional bias: low complexity. Residues 619-634 (EPVKSESEAPEEDPRK) show a composition bias toward basic and acidic residues. The span at 635-653 (AAVAAAIARVKAKKAAQAQ) shows a compositional bias: low complexity. A compositionally biased stretch (basic and acidic residues) spans 657–672 (EPVKSESEAPEEDPRK).

This sequence belongs to the 4Fe4S bacterial-type ferredoxin family. RnfC subfamily. In terms of assembly, the complex is composed of six subunits: RnfA, RnfB, RnfC, RnfD, RnfE and RnfG. [4Fe-4S] cluster serves as cofactor.

The protein localises to the cell inner membrane. In terms of biological role, part of a membrane-bound complex that couples electron transfer with translocation of ions across the membrane. The protein is Ion-translocating oxidoreductase complex subunit C of Yersinia enterocolitica serotype O:8 / biotype 1B (strain NCTC 13174 / 8081).